Consider the following 558-residue polypeptide: 2-hydroxy-7-methoxy-5-methyl-1-naphthoate--CoA ligase (558 aa).

Residues 212-213 (GG), 329-331 (ASR), Val351, Asp435, Arg450, and Lys542 contribute to the ATP site.

It belongs to the ATP-dependent AMP-binding enzyme family.

It carries out the reaction 2-hydroxy-7-methoxy-5-methyl-1-naphthoate + ATP + CoA = 2-hydroxy-7-methoxy-5-methyl-1-naphthoyl-CoA + AMP + diphosphate. It participates in antibiotic biosynthesis. In terms of biological role, catalyzes the activation of 2-hydroxy-7-methoxy-5-methyl-1-naphthoate in the biosynthesis of the naphthoate moiety of the neocarzinostatin chromophore. Also catalyzes the activation of other 1-naphthoic acid analogs such as 2-hydroxy-5-methyl-1-naphthoate or 2,7-dihydroxy-5-methyl-1-naphthoate in vitro. The protein is 2-hydroxy-7-methoxy-5-methyl-1-naphthoate--CoA ligase of Streptomyces carzinostaticus.